Here is a 241-residue protein sequence, read N- to C-terminus: Cell division cycle-associated protein 4 (241 aa).

Residues 30–77 form the SERTA domain; the sequence is YSLQRQSLLDMSLVKLQLCHMLVEPNLCRSVLIANTVRQIQEEMTQDG.

As to expression, highest levels of expression in the pancreas, thymus, testis, spleen, liver, placenta and leukocytes. Relatively low levels in the lung, kidney, prostate, ovary, small intestine and colon. Hardly detectable, if at all, in the brain, skeletal muscle and heart.

It is found in the nucleus. May participate in the regulation of cell proliferation through the E2F/RB pathway. May be involved in molecular regulation of hematopoietic stem cells and progenitor cell lineage commitment and differentiation. The chain is Cell division cycle-associated protein 4 (CDCA4) from Homo sapiens (Human).